A 938-amino-acid chain; its full sequence is Leucine--tRNA ligase 1 (938 aa).

Positions Pro-40–His-50 match the 'HIGH' region motif. The 'KMSKS' region motif lies at Lys-620 to Ser-624. Lys-623 is an ATP binding site.

The protein belongs to the class-I aminoacyl-tRNA synthetase family.

The protein localises to the cytoplasm. The enzyme catalyses tRNA(Leu) + L-leucine + ATP = L-leucyl-tRNA(Leu) + AMP + diphosphate. This Metallosphaera sedula (strain ATCC 51363 / DSM 5348 / JCM 9185 / NBRC 15509 / TH2) protein is Leucine--tRNA ligase 1.